We begin with the raw amino-acid sequence, 332 residues long: UBA domain-containing protein Mud1 (332 aa).

Asp-127 is an active-site residue. A disordered region spans residues 246 to 298 (GLGIEPASKASASSPNPQSGTRLGTKESVAPNNEGSSNPPSLVNPPTDPGLNS). A compositionally biased stretch (low complexity) spans 251–264 (PASKASASSPNPQS). Polar residues predominate over residues 275 to 286 (APNNEGSSNPPS). A UBA domain is found at 291–332 (PTDPGLNSKIAQLVSMGFDPLEAAQALDAANGDLDVAASFLL).

This sequence belongs to the DDI1 family. As to quaternary structure, homodimer. Interacts (via UBA domain) with polyubiquitin (polyUb) chains (via Lys-48-linked polyUbs). Has weak binding affinity for monoubiquitin. According to another report, has no affinity for monoubiquitin.

It is found in the cytoplasm. The protein resides in the cell membrane. In terms of biological role, recognizes and binds polyubiquitin chains. Acts as a linker between the 19S proteasome and polyubiquitinated proteins via UBA domain interactions with ubiquitin for their subsequent degradation. Aspartic protease. Appears to act as negative regulator of constitutive exocytosis. May act at the level of secretory vesicle docking and fusion as a competitive inhibitor of SNARE assembly. Required for S-phase checkpoint control. In Schizosaccharomyces pombe (strain 972 / ATCC 24843) (Fission yeast), this protein is UBA domain-containing protein Mud1.